A 200-amino-acid chain; its full sequence is Dual-action ribosomal maturation protein DarP (200 aa).

2 disordered regions span residues 1–25 (MTRKTRIQPIEHAAEVDDNGYDRPS) and 177–200 (TASGTPGGDDEAADEAGDDHDDEA). Residues 12-25 (HAAEVDDNGYDRPS) show a composition bias toward basic and acidic residues. Acidic residues predominate over residues 184–200 (GDDEAADEAGDDHDDEA).

The protein belongs to the DarP family.

The protein localises to the cytoplasm. Member of a network of 50S ribosomal subunit biogenesis factors which assembles along the 30S-50S interface, preventing incorrect 23S rRNA structures from forming. Promotes peptidyl transferase center (PTC) maturation. The sequence is that of Dual-action ribosomal maturation protein DarP from Burkholderia ambifaria (strain MC40-6).